A 158-amino-acid polypeptide reads, in one-letter code: UPF0262 protein R00612 (158 aa).

Belongs to the UPF0262 family.

This is UPF0262 protein R00612 from Rhizobium meliloti (strain 1021) (Ensifer meliloti).